We begin with the raw amino-acid sequence, 403 residues long: CCA-adding enzyme (403 aa).

2 residues coordinate ATP: Gly32 and Arg35. CTP contacts are provided by Gly32 and Arg35. The Mg(2+) site is built by Asp45 and Asp47. Residues Arg116, Asp159, Arg162, Arg165, and Arg168 each coordinate ATP. CTP is bound by residues Arg116, Asp159, Arg162, Arg165, and Arg168.

It belongs to the tRNA nucleotidyltransferase/poly(A) polymerase family. Bacterial CCA-adding enzyme type 3 subfamily. As to quaternary structure, homodimer. It depends on Mg(2+) as a cofactor.

The enzyme catalyses a tRNA precursor + 2 CTP + ATP = a tRNA with a 3' CCA end + 3 diphosphate. The catalysed reaction is a tRNA with a 3' CCA end + 2 CTP + ATP = a tRNA with a 3' CCACCA end + 3 diphosphate. In terms of biological role, catalyzes the addition and repair of the essential 3'-terminal CCA sequence in tRNAs without using a nucleic acid template. Adds these three nucleotides in the order of C, C, and A to the tRNA nucleotide-73, using CTP and ATP as substrates and producing inorganic pyrophosphate. tRNA 3'-terminal CCA addition is required both for tRNA processing and repair. Also involved in tRNA surveillance by mediating tandem CCA addition to generate a CCACCA at the 3' terminus of unstable tRNAs. While stable tRNAs receive only 3'-terminal CCA, unstable tRNAs are marked with CCACCA and rapidly degraded. The chain is CCA-adding enzyme from Limosilactobacillus reuteri (strain DSM 20016) (Lactobacillus reuteri).